We begin with the raw amino-acid sequence, 295 residues long: Small ribosomal subunit protein uS2 (295 aa).

Residues 263 to 295 (KKFSKTKNIDEETNTEFEQALNDADENKNSDNA) are disordered.

The protein belongs to the universal ribosomal protein uS2 family.

The sequence is that of Small ribosomal subunit protein uS2 from Rickettsia massiliae (strain Mtu5).